Here is a 184-residue protein sequence, read N- to C-terminus: Adenine phosphoribosyltransferase (184 aa).

It belongs to the purine/pyrimidine phosphoribosyltransferase family. Homodimer.

It localises to the cytoplasm. The catalysed reaction is AMP + diphosphate = 5-phospho-alpha-D-ribose 1-diphosphate + adenine. The protein operates within purine metabolism; AMP biosynthesis via salvage pathway; AMP from adenine: step 1/1. Catalyzes a salvage reaction resulting in the formation of AMP, that is energically less costly than de novo synthesis. The sequence is that of Adenine phosphoribosyltransferase from Mycobacterium marinum (strain ATCC BAA-535 / M).